A 144-amino-acid polypeptide reads, in one-letter code: D-aminoacyl-tRNA deacylase (144 aa).

The Gly-cisPro motif, important for rejection of L-amino acids signature appears at 137–138 (GP).

This sequence belongs to the DTD family. As to quaternary structure, homodimer.

Its subcellular location is the cytoplasm. The catalysed reaction is glycyl-tRNA(Ala) + H2O = tRNA(Ala) + glycine + H(+). It catalyses the reaction a D-aminoacyl-tRNA + H2O = a tRNA + a D-alpha-amino acid + H(+). Its function is as follows. An aminoacyl-tRNA editing enzyme that deacylates mischarged D-aminoacyl-tRNAs. Also deacylates mischarged glycyl-tRNA(Ala), protecting cells against glycine mischarging by AlaRS. Acts via tRNA-based rather than protein-based catalysis; rejects L-amino acids rather than detecting D-amino acids in the active site. By recycling D-aminoacyl-tRNA to D-amino acids and free tRNA molecules, this enzyme counteracts the toxicity associated with the formation of D-aminoacyl-tRNA entities in vivo and helps enforce protein L-homochirality. The sequence is that of D-aminoacyl-tRNA deacylase from Marinomonas sp. (strain MWYL1).